The sequence spans 469 residues: Probable periplasmic serine endoprotease DegP-like (469 aa).

Positions 1 to 25 (MKVCQKYTAVLLVWLSAVVSMRAGA) are cleaved as a signal peptide. Catalysis depends on charge relay system residues H108, D138, and S211. Substrate is bound by residues 209-211 (GNS) and 266-270 (LGVLI). PDZ domains lie at 255–346 (LKDT…VRRG) and 352–457 (AVEI…IRQG).

This sequence belongs to the peptidase S1C family.

The protein localises to the periplasm. It carries out the reaction Acts on substrates that are at least partially unfolded. The cleavage site P1 residue is normally between a pair of hydrophobic residues, such as Val-|-Val.. Its function is as follows. Might be efficient in the degradation of transiently denatured and unfolded proteins which accumulate in the periplasm following stress conditions. This is Probable periplasmic serine endoprotease DegP-like (mucD) from Hahella chejuensis (strain KCTC 2396).